The chain runs to 378 residues: Succinyl-diaminopimelate desuccinylase (378 aa).

H77 lines the Zn(2+) pocket. Residue D79 is part of the active site. Zn(2+) is bound at residue D108. E138 serves as the catalytic Proton acceptor. Residues E139, E167, and H350 each contribute to the Zn(2+) site.

Belongs to the peptidase M20A family. DapE subfamily. As to quaternary structure, homodimer. Zn(2+) is required as a cofactor. It depends on Co(2+) as a cofactor.

It catalyses the reaction N-succinyl-(2S,6S)-2,6-diaminopimelate + H2O = (2S,6S)-2,6-diaminopimelate + succinate. It participates in amino-acid biosynthesis; L-lysine biosynthesis via DAP pathway; LL-2,6-diaminopimelate from (S)-tetrahydrodipicolinate (succinylase route): step 3/3. In terms of biological role, catalyzes the hydrolysis of N-succinyl-L,L-diaminopimelic acid (SDAP), forming succinate and LL-2,6-diaminopimelate (DAP), an intermediate involved in the bacterial biosynthesis of lysine and meso-diaminopimelic acid, an essential component of bacterial cell walls. The protein is Succinyl-diaminopimelate desuccinylase of Erythrobacter litoralis (strain HTCC2594).